Consider the following 87-residue polypeptide: DNA-directed RNA polymerase subunit omega (87 aa).

The protein belongs to the RNA polymerase subunit omega family. The RNAP catalytic core consists of 2 alpha, 1 beta, 1 beta' and 1 omega subunit. When a sigma factor is associated with the core the holoenzyme is formed, which can initiate transcription.

The catalysed reaction is RNA(n) + a ribonucleoside 5'-triphosphate = RNA(n+1) + diphosphate. Its function is as follows. Promotes RNA polymerase assembly. Latches the N- and C-terminal regions of the beta' subunit thereby facilitating its interaction with the beta and alpha subunits. The polypeptide is DNA-directed RNA polymerase subunit omega (Pseudomonas putida (strain ATCC 700007 / DSM 6899 / JCM 31910 / BCRC 17059 / LMG 24140 / F1)).